We begin with the raw amino-acid sequence, 345 residues long: S-adenosylmethionine:tRNA ribosyltransferase-isomerase (345 aa).

Belongs to the QueA family. In terms of assembly, monomer.

Its subcellular location is the cytoplasm. The catalysed reaction is 7-aminomethyl-7-carbaguanosine(34) in tRNA + S-adenosyl-L-methionine = epoxyqueuosine(34) in tRNA + adenine + L-methionine + 2 H(+). Its pathway is tRNA modification; tRNA-queuosine biosynthesis. In terms of biological role, transfers and isomerizes the ribose moiety from AdoMet to the 7-aminomethyl group of 7-deazaguanine (preQ1-tRNA) to give epoxyqueuosine (oQ-tRNA). The polypeptide is S-adenosylmethionine:tRNA ribosyltransferase-isomerase (Thermus thermophilus (strain ATCC BAA-163 / DSM 7039 / HB27)).